The primary structure comprises 51 residues: Large ribosomal subunit protein bL33 (51 aa).

Belongs to the bacterial ribosomal protein bL33 family.

This chain is Large ribosomal subunit protein bL33, found in Psychrobacter arcticus (strain DSM 17307 / VKM B-2377 / 273-4).